Here is a 62-residue protein sequence, read N- to C-terminus: Small ribosomal subunit protein bS21 (62 aa).

Positions 38–62 (YEKPSERRKRKMNAAVRKNRRTRHG) are disordered.

It belongs to the bacterial ribosomal protein bS21 family.

This Gemmatimonas aurantiaca (strain DSM 14586 / JCM 11422 / NBRC 100505 / T-27) protein is Small ribosomal subunit protein bS21.